A 527-amino-acid polypeptide reads, in one-letter code: Putative adhesin P1-like protein MPN_500 (527 aa).

Disordered regions lie at residues M1–S26, G76–Y148, A248–S269, and F468–H527. The segment covering T9–S26 has biased composition (low complexity). Over residues T82–F95 the composition is skewed to polar residues. Positions S108–N117 are enriched in low complexity. A compositionally biased stretch (polar residues) spans Q128–Y148. A compositionally biased stretch (low complexity) spans A248–G262. A compositionally biased stretch (polar residues) spans F468 to L495. A compositionally biased stretch (gly residues) spans S500–Q513.

This sequence belongs to the adhesin P1 family.

The polypeptide is Putative adhesin P1-like protein MPN_500 (Mycoplasma pneumoniae (strain ATCC 29342 / M129 / Subtype 1) (Mycoplasmoides pneumoniae)).